The primary structure comprises 408 residues: MKDVLERFLGYIKVDTQSSEESDTVPTTKTQLEFAKKLGEELKAIGLKDVSVDESGYVMATLESNIDKKVPAIGFIAHMDTSPDLSGTNINPRIVEKYDGQDIVLNKEKNIVLKINEFPEILEYKGQDIVVTDGNTLLGADDKAGIAEIITAMEYLINHPEIKHGTIKVGFTPDEEVGKGADHFDVKKFGADLAYTLDGGGIGELECETFNAAKAKVIIEGRNVHPGSAKNKMTNAVLVANKFINTLPENEVPERTEGYEGFFHLLSVKSEVETAELNYIIRDFDRKKFEERKEQIKEVGKKINEEYNKEIVCVKVEDQYYNMKEKIDEVKYVVDIAYDAMKAIDIEPILVPIRGGTDGSRLSFMGLPTPNLFAGGHNFHGRFEFVPVLSMEKAAELVVKIAELYANR.

H78 lines the Zn(2+) pocket. The active site involves D80. Position 141 (D141) interacts with Zn(2+). The active-site Proton acceptor is the E175. Zn(2+)-binding residues include E176, D198, and H380.

Belongs to the peptidase M20B family. The cofactor is Zn(2+).

Its subcellular location is the cytoplasm. The catalysed reaction is Release of the N-terminal residue from a tripeptide.. Cleaves the N-terminal amino acid of tripeptides. The polypeptide is Peptidase T (Clostridium botulinum (strain Okra / Type B1)).